The primary structure comprises 216 residues: Outer-membrane lipoprotein LolB (216 aa).

Residues 1 to 21 (MLIFKICFYRLLPLSVLLLAA) form the signal peptide. The N-palmitoyl cysteine moiety is linked to residue Cys22. Residue Cys22 is the site of S-diacylglycerol cysteine attachment.

The protein belongs to the LolB family. Monomer.

It localises to the cell outer membrane. Functionally, plays a critical role in the incorporation of lipoproteins in the outer membrane after they are released by the LolA protein. This is Outer-membrane lipoprotein LolB from Hamiltonella defensa subsp. Acyrthosiphon pisum (strain 5AT).